A 185-amino-acid chain; its full sequence is Peptide methionine sulfoxide reductase MsrA (185 aa).

The active site involves Cys-12.

Belongs to the MsrA Met sulfoxide reductase family.

The catalysed reaction is L-methionyl-[protein] + [thioredoxin]-disulfide + H2O = L-methionyl-(S)-S-oxide-[protein] + [thioredoxin]-dithiol. It carries out the reaction [thioredoxin]-disulfide + L-methionine + H2O = L-methionine (S)-S-oxide + [thioredoxin]-dithiol. In terms of biological role, has an important function as a repair enzyme for proteins that have been inactivated by oxidation. Catalyzes the reversible oxidation-reduction of methionine sulfoxide in proteins to methionine. The chain is Peptide methionine sulfoxide reductase MsrA from Granulibacter bethesdensis (strain ATCC BAA-1260 / CGDNIH1).